A 310-amino-acid chain; its full sequence is Homeobox protein Hox-A13a (310 aa).

Positions 244 to 303 (GRKKRVPYTKVQLKELEREYATNKFITKDKRRRISAQTNLSERQVTIWFQNRRVKEKKVV) form a DNA-binding region, homeobox.

Belongs to the Abd-B homeobox family.

Its subcellular location is the nucleus. Its function is as follows. Sequence-specific transcription factor which is part of a developmental regulatory system that provides cells with specific positional identities on the anterior-posterior axis. The chain is Homeobox protein Hox-A13a (hoxa13a) from Danio rerio (Zebrafish).